The chain runs to 119 residues: Large ribosomal subunit protein uL18 (119 aa).

This sequence belongs to the universal ribosomal protein uL18 family. Part of the 50S ribosomal subunit; part of the 5S rRNA/L5/L18/L25 subcomplex. Contacts the 5S and 23S rRNAs.

Its function is as follows. This is one of the proteins that bind and probably mediate the attachment of the 5S RNA into the large ribosomal subunit, where it forms part of the central protuberance. The sequence is that of Large ribosomal subunit protein uL18 from Tropheryma whipplei (strain TW08/27) (Whipple's bacillus).